Consider the following 172-residue polypeptide: Stellate protein CG33247 (172 aa).

This sequence belongs to the casein kinase 2 subunit beta family. As to quaternary structure, interacts in vitro with the casein kinase 2 alpha subunit (CkII-alpha). The relevance of such interaction is however unclear in vivo. Probably not expressed in wild-type flies. In males lacking the Y chromosome, it is testis-specific and constitutes the main component of star-shaped crystals.

Functionally, unknown. In males lacking the Y chromosome, its strong overexpression leads to the appearance of proteinaceous star-shaped crystals in the primary spermatocytes causing meiotic drive, possibly by interfering with normal casein kinase 2 activity. In Drosophila melanogaster (Fruit fly), this protein is Stellate protein CG33247 (Ste:CG33247).